Here is a 292-residue protein sequence, read N- to C-terminus: MPWLQVRLAISPEQAETYEDALLEVGAVSVTFMDAEDQPIFEPELNTTPLWTHTHLLALFEADTNAEMALAHLSLLTGEELPEHSAEVIEDQDWERSWMDNFQPMCFGKRLWIVPSWHAAPQPDAVNLLLDPGLAFGTGTHPTTALCLEWLDGQDLKGCNVLDFGCGSGILAIAALLLGAEQAVGTDIDVQALEASRDNAGRNKIAAERFPLYLPEDLPHQQADVLVANILAGPLVSLAPQLASLVRTGGRLALSGILAEQGEEVAAAYADSFDLDPIANRDGWVRITGRRR.

Thr-144, Gly-165, Asp-187, and Asn-229 together coordinate S-adenosyl-L-methionine.

Belongs to the methyltransferase superfamily. PrmA family.

Its subcellular location is the cytoplasm. The catalysed reaction is L-lysyl-[protein] + 3 S-adenosyl-L-methionine = N(6),N(6),N(6)-trimethyl-L-lysyl-[protein] + 3 S-adenosyl-L-homocysteine + 3 H(+). Methylates ribosomal protein L11. In Pseudomonas savastanoi pv. phaseolicola (strain 1448A / Race 6) (Pseudomonas syringae pv. phaseolicola (strain 1448A / Race 6)), this protein is Ribosomal protein L11 methyltransferase.